A 204-amino-acid chain; its full sequence is Calexcitin-1 (204 aa).

EF-hand domains follow at residues 25–61 (FLVK…VRDI), 75–110 (SLAA…TDAK), and 115–150 (WFKD…YGFD). Positions 39, 41, 43, 45, 50, 88, 90, 92, 99, 128, 130, 132, and 139 each coordinate Ca(2+).

The chain is Calexcitin-1 (cex-1) from Caenorhabditis elegans.